We begin with the raw amino-acid sequence, 320 residues long: Ferrochelatase (320 aa).

Fe cation-binding residues include histidine 194 and glutamate 275.

The protein belongs to the ferrochelatase family. Monomer.

It is found in the cytoplasm. It catalyses the reaction heme b + 2 H(+) = protoporphyrin IX + Fe(2+). Its pathway is porphyrin-containing compound metabolism; protoheme biosynthesis; protoheme from protoporphyrin-IX: step 1/1. Functionally, catalyzes the ferrous insertion into protoporphyrin IX. The chain is Ferrochelatase from Salmonella dublin (strain CT_02021853).